The following is a 473-amino-acid chain: Photosystem II CP43 reaction center protein (473 aa).

Residues 1–14 (MKTLYSLRRFYPVE) constitute a propeptide that is removed on maturation. Position 15 is an N-acetylthreonine (T15). A Phosphothreonine modification is found at T15. The next 5 membrane-spanning stretches (helical) occupy residues 69 to 93 (LFEV…PHLA), 134 to 155 (LLGP…KDRN), 178 to 200 (KALY…RRIT), 255 to 275 (KPFA…LSYS), and 291 to 312 (WFNN…ASQA). [CaMn4O5] cluster is bound at residue E367. A helical transmembrane segment spans residues 447 to 471 (RARAAAAGFEKGIDRDFEPVLFMTP).

It belongs to the PsbB/PsbC family. PsbC subfamily. In terms of assembly, PSII is composed of 1 copy each of membrane proteins PsbA, PsbB, PsbC, PsbD, PsbE, PsbF, PsbH, PsbI, PsbJ, PsbK, PsbL, PsbM, PsbT, PsbX, PsbY, PsbZ, Psb30/Ycf12, at least 3 peripheral proteins of the oxygen-evolving complex and a large number of cofactors. It forms dimeric complexes. It depends on Binds multiple chlorophylls and provides some of the ligands for the Ca-4Mn-5O cluster of the oxygen-evolving complex. It may also provide a ligand for a Cl- that is required for oxygen evolution. PSII binds additional chlorophylls, carotenoids and specific lipids. as a cofactor.

Its subcellular location is the plastid. It is found in the chloroplast thylakoid membrane. In terms of biological role, one of the components of the core complex of photosystem II (PSII). It binds chlorophyll and helps catalyze the primary light-induced photochemical processes of PSII. PSII is a light-driven water:plastoquinone oxidoreductase, using light energy to abstract electrons from H(2)O, generating O(2) and a proton gradient subsequently used for ATP formation. The protein is Photosystem II CP43 reaction center protein of Nuphar advena (Common spatterdock).